A 265-amino-acid polypeptide reads, in one-letter code: Ribosomal RNA small subunit methyltransferase A (265 aa).

S-adenosyl-L-methionine contacts are provided by H13, L15, G40, E62, D87, and N106.

It belongs to the class I-like SAM-binding methyltransferase superfamily. rRNA adenine N(6)-methyltransferase family. RsmA subfamily.

The protein resides in the cytoplasm. It carries out the reaction adenosine(1518)/adenosine(1519) in 16S rRNA + 4 S-adenosyl-L-methionine = N(6)-dimethyladenosine(1518)/N(6)-dimethyladenosine(1519) in 16S rRNA + 4 S-adenosyl-L-homocysteine + 4 H(+). Specifically dimethylates two adjacent adenosines (A1518 and A1519) in the loop of a conserved hairpin near the 3'-end of 16S rRNA in the 30S particle. May play a critical role in biogenesis of 30S subunits. The sequence is that of Ribosomal RNA small subunit methyltransferase A from Persephonella marina (strain DSM 14350 / EX-H1).